The chain runs to 473 residues: Glutamate--tRNA ligase (473 aa).

Positions 9-19 (PSPTGYLHVGG) match the 'HIGH' region motif. Zn(2+) is bound by residues cysteine 98, cysteine 100, cysteine 125, and aspartate 127. Positions 237–241 (KLSKR) match the 'KMSKS' region motif. An ATP-binding site is contributed by lysine 240.

The protein belongs to the class-I aminoacyl-tRNA synthetase family. Glutamate--tRNA ligase type 1 subfamily. Monomer. Zn(2+) serves as cofactor.

The protein resides in the cytoplasm. The enzyme catalyses tRNA(Glu) + L-glutamate + ATP = L-glutamyl-tRNA(Glu) + AMP + diphosphate. In terms of biological role, catalyzes the attachment of glutamate to tRNA(Glu) in a two-step reaction: glutamate is first activated by ATP to form Glu-AMP and then transferred to the acceptor end of tRNA(Glu). This is Glutamate--tRNA ligase from Sodalis glossinidius (strain morsitans).